The sequence spans 335 residues: BTB and MATH domain-containing protein 39 (335 aa).

The MATH domain occupies 14-141 (MKTLCFKIMN…NGVFTIEFDL (128 aa)). Positions 161-226 (ADGKLIVEDQ…LQLDEFKVNV (66 aa)) constitute a BTB domain.

This is BTB and MATH domain-containing protein 39 from Caenorhabditis briggsae.